The chain runs to 298 residues: Osmoprotective compounds uptake permease protein GgtD (298 aa).

A run of 7 helical transmembrane segments spans residues 26–46 (IHIAILTIAFIWTLPSLGLFI), 97–117 (IAVPATVIPIAIATFAAYAFA), 126–146 (LLFILVVCLLVVPLQTTLIPV), 158–178 (TFLGVWLAHTAYGLPLGIYLL), 207–227 (LIVPLSMPAIASFAVFQFLWV), 231–251 (LLVALVYLGGTADVAPVTIQL), and 263–283 (YLLTAGAFISMIVPLMVFFGL). Residues 91–283 (FLNSLTIAVP…IVPLMVFFGL (193 aa)) form the ABC transmembrane type-1 domain.

It belongs to the binding-protein-dependent transport system permease family. In terms of assembly, the complex is composed of two ATP-binding proteins (GgtA), two transmembrane proteins (GgtC and GgtD) and a solute-binding protein (GgtB).

It is found in the cell membrane. Functionally, part of the ABC transporter complex GgtABCD involved in the uptake of the osmoprotective compounds glucosylglycerol (GG), sucrose and trehalose. Responsible for the translocation of the substrate across the membrane. This chain is Osmoprotective compounds uptake permease protein GgtD, found in Synechocystis sp. (strain ATCC 27184 / PCC 6803 / Kazusa).